Reading from the N-terminus, the 191-residue chain is Peptidyl-tRNA hydrolase (191 aa).

Tyrosine 16 lines the tRNA pocket. The active-site Proton acceptor is the histidine 21. 3 residues coordinate tRNA: tyrosine 67, asparagine 69, and asparagine 115.

The protein belongs to the PTH family. Monomer.

It localises to the cytoplasm. The catalysed reaction is an N-acyl-L-alpha-aminoacyl-tRNA + H2O = an N-acyl-L-amino acid + a tRNA + H(+). Hydrolyzes ribosome-free peptidyl-tRNAs (with 1 or more amino acids incorporated), which drop off the ribosome during protein synthesis, or as a result of ribosome stalling. Its function is as follows. Catalyzes the release of premature peptidyl moieties from peptidyl-tRNA molecules trapped in stalled 50S ribosomal subunits, and thus maintains levels of free tRNAs and 50S ribosomes. The chain is Peptidyl-tRNA hydrolase from Wigglesworthia glossinidia brevipalpis.